Consider the following 197-residue polypeptide: Segregation and condensation protein B (197 aa).

The protein belongs to the ScpB family. In terms of assembly, homodimer. Homodimerization may be required to stabilize the binding of ScpA to the Smc head domains. Component of a cohesin-like complex composed of ScpA, ScpB and the Smc homodimer, in which ScpA and ScpB bind to the head domain of Smc. The presence of the three proteins is required for the association of the complex with DNA.

The protein resides in the cytoplasm. Participates in chromosomal partition during cell division. May act via the formation of a condensin-like complex containing Smc and ScpA that pull DNA away from mid-cell into both cell halves. This chain is Segregation and condensation protein B, found in Halalkalibacterium halodurans (strain ATCC BAA-125 / DSM 18197 / FERM 7344 / JCM 9153 / C-125) (Bacillus halodurans).